The following is a 1209-amino-acid chain: Major DNA-binding protein (1209 aa).

The tract at residues 290 to 312 (NAGKGSGRAQRQGDGSGSKNSAS) is disordered. The segment at 503 to 516 (CGLCNQATRPACAH) is a zinc-finger region. Positions 849–850 (FW) match the Required for filament formation motif. Residues 1182–1209 (QKRSLPDDILFDMGAPPEKKSGLTFDML) form a required for nuclear localization region.

The protein belongs to the herpesviridae major DNA-binding protein family. As to quaternary structure, homooligomers. Forms double-helical filaments necessary for the formation of replication compartments within the host nucleus. Interacts with the origin-binding protein. Interacts with the helicase primase complex; this interaction stimulates primer synthesis activity of the helicase-primase complex. Interacts with the DNA polymerase. Interacts with the alkaline exonuclease; this interaction increases its nuclease processivity.

It localises to the host nucleus. Plays several crucial roles in viral infection. Participates in the opening of the viral DNA origin to initiate replication by interacting with the origin-binding protein. May disrupt loops, hairpins and other secondary structures present on ssDNA to reduce and eliminate pausing of viral DNA polymerase at specific sites during elongation. Promotes viral DNA recombination by performing strand-transfer, characterized by the ability to transfer a DNA strand from a linear duplex to a complementary single-stranded DNA circle. Can also catalyze the renaturation of complementary single strands. Additionally, reorganizes the host cell nucleus, leading to the formation of prereplicative sites and replication compartments. This process is driven by the protein which can form double-helical filaments in the absence of DNA. The chain is Major DNA-binding protein from Equine herpesvirus 1 (strain Ab4p) (EHV-1).